The chain runs to 279 residues: Protease HtpX homolog (279 aa).

A run of 2 helical transmembrane segments spans residues 4 to 24 and 34 to 54; these read IFLF…VLAV and GSLL…SLLM. H140 is a Zn(2+) binding site. E141 is a catalytic residue. H144 contributes to the Zn(2+) binding site. The next 2 helical transmembrane spans lie at 155 to 175 and 189 to 209; these read LIQG…ANLI and FLVS…IVMW. Position 215 (E215) interacts with Zn(2+).

It belongs to the peptidase M48B family. Zn(2+) is required as a cofactor.

It is found in the cell inner membrane. This Neisseria gonorrhoeae (strain ATCC 700825 / FA 1090) protein is Protease HtpX homolog.